The chain runs to 361 residues: Peptide chain release factor 1 (361 aa).

Q237 carries the N5-methylglutamine modification. The tract at residues 283-307 is disordered; it reads AQQQEQQEQQSSTRKELIGSGDRSQ.

This sequence belongs to the prokaryotic/mitochondrial release factor family. In terms of processing, methylated by PrmC. Methylation increases the termination efficiency of RF1.

It localises to the cytoplasm. Peptide chain release factor 1 directs the termination of translation in response to the peptide chain termination codons UAG and UAA. This Vesicomyosocius okutanii subsp. Calyptogena okutanii (strain HA) protein is Peptide chain release factor 1.